The primary structure comprises 392 residues: Probable tRNA sulfurtransferase (392 aa).

The THUMP domain maps to 60–162 (QQVINDLQQV…HDCAIVYGHK (103 aa)). ATP-binding positions include 180–181 (LL), 205–206 (TF), Arg-264, Gly-286, and Gln-295.

It belongs to the ThiI family.

The protein resides in the cytoplasm. It catalyses the reaction [ThiI sulfur-carrier protein]-S-sulfanyl-L-cysteine + a uridine in tRNA + 2 reduced [2Fe-2S]-[ferredoxin] + ATP + H(+) = [ThiI sulfur-carrier protein]-L-cysteine + a 4-thiouridine in tRNA + 2 oxidized [2Fe-2S]-[ferredoxin] + AMP + diphosphate. The catalysed reaction is [ThiS sulfur-carrier protein]-C-terminal Gly-Gly-AMP + S-sulfanyl-L-cysteinyl-[cysteine desulfurase] + AH2 = [ThiS sulfur-carrier protein]-C-terminal-Gly-aminoethanethioate + L-cysteinyl-[cysteine desulfurase] + A + AMP + 2 H(+). Its pathway is cofactor biosynthesis; thiamine diphosphate biosynthesis. Its function is as follows. Catalyzes the ATP-dependent transfer of a sulfur to tRNA to produce 4-thiouridine in position 8 of tRNAs, which functions as a near-UV photosensor. Also catalyzes the transfer of sulfur to the sulfur carrier protein ThiS, forming ThiS-thiocarboxylate. This is a step in the synthesis of thiazole, in the thiamine biosynthesis pathway. The sulfur is donated as persulfide by IscS. This chain is Probable tRNA sulfurtransferase, found in Ureaplasma urealyticum serovar 10 (strain ATCC 33699 / Western).